The chain runs to 510 residues: Myosin-binding protein C, cardiac-type (510 aa).

3 consecutive Ig-like C2-type domains span residues 177–269 (KKST…VKEP), 270–347 (PYSS…TVKT), and 378–438 (RDQA…SFIP).

Belongs to the immunoglobulin superfamily. MyBP family. In terms of tissue distribution, heart.

Thick filament-associated protein located in the crossbridge region of vertebrate striated muscle a bands. In vitro it binds MHC, F-actin and native thin filaments, and modifies the activity of actin-activated myosin ATPase. It may modulate muscle contraction or may play a more structural role. This is Myosin-binding protein C, cardiac-type from Ambystoma mexicanum (Axolotl).